We begin with the raw amino-acid sequence, 264 residues long: MTMEILLVNDDGIYSNGLLALKNVISEEFDANVTVVAPTNQQSGIGRAISLFEPLRITKTKLADCSEGYAVSGTPTDCVVLGVHQVLKKVPDYVISGINIGENLGTELTTSGTLGAAFEGAHHGAKALACSLQVTTDHLKFKEGESPIDFMTTARIVRNVFKKFLDDEFPCDVININVPDNATENTPVEITKLARKMYSMHVEERIDPRSRSYYWLDGYPIMDEEDGTDVYAVRNKRNVSVTPLTLDNTAKNLDEFREKYAKKF.

D10, D11, S43, and N99 together coordinate a divalent metal cation.

The protein belongs to the SurE nucleotidase family. Requires a divalent metal cation as cofactor.

Its subcellular location is the cytoplasm. The enzyme catalyses a ribonucleoside 5'-phosphate + H2O = a ribonucleoside + phosphate. Functionally, nucleotidase that shows phosphatase activity on nucleoside 5'-monophosphates. The polypeptide is 5'-nucleotidase SurE (Methanococcus maripaludis (strain C6 / ATCC BAA-1332)).